The following is a 465-amino-acid chain: MNAQLTMEAIGELHGVSHEPVPAPADLLGGSPHARSSVGHRGSHLPPAHPRSMGMASLLDGGSGGSDYHHHHRAPEHSLAGPLHPTMTMACETPPGMSMPTTYTTLTPLQPLPPISTVSDKFPHHHHHHHHHHHPHHHQRLAGNVSGSFTLMRDERGLASMNNLYTPYHKDVAGMGQSLSPLSGSGLGSIHNSQQGLPHYAHPGAAMPTDKMLTPNGFEAHHPAMLGRHGEQHLTPTSAGMVPINGLPPHHPHAHLNAQGHGQLLGTAREPNPSVTGAQVSNGSNSGQMEEINTKEVAQRITTELKRYSIPQAIFAQRVLCRSQGTLSDLLRNPKPWSKLKSGRETFRRMWKWLQEPEFQRMSALRLAACKRKEQEHGKDRGNTPKKPRLVFTDVQRRTLHAIFKENKRPSKELQITISQQLGLELSTVSNFFMNARRRSLDKWQDEGGSNSGSSSSSSSTCTKA.

2 disordered regions span residues 15 to 84 and 119 to 141; these read GVSH…GPLH and SDKF…HQRL. Over residues 123–140 the composition is skewed to basic residues; it reads PHHHHHHHHHHHPHHHQR. A DNA-binding region (CUT) is located at residues 283-369; it reads GSNSGQMEEI…QRMSALRLAA (87 aa). The homeobox DNA-binding region spans 385–444; that stretch reads PKKPRLVFTDVQRRTLHAIFKENKRPSKELQITISQQLGLELSTVSNFFMNARRRSLDKW. Residues 443-465 are disordered; that stretch reads KWQDEGGSNSGSSSSSSSTCTKA. Positions 448–465 are enriched in low complexity; sequence GGSNSGSSSSSSSTCTKA.

It belongs to the CUT homeobox family. Binds DNA as a monomer.

The protein resides in the nucleus. In terms of biological role, transcriptional activator. Binds the consensus sequence 5'-DHWATTGAYTWWD-3' on a variety of gene promoters such as those of HNF3B and TTR. Important for liver genes transcription. Stimulates the expression of Onecut3 in the developing endoderm. The polypeptide is Hepatocyte nuclear factor 6 (Onecut1) (Mus musculus (Mouse)).